We begin with the raw amino-acid sequence, 212 residues long: Methylthioribulose-1-phosphate dehydratase (212 aa).

Residues His-97 and His-99 each coordinate Zn(2+).

This sequence belongs to the aldolase class II family. MtnB subfamily. As to quaternary structure, homotetramer. Zn(2+) serves as cofactor.

The catalysed reaction is 5-(methylsulfanyl)-D-ribulose 1-phosphate = 5-methylsulfanyl-2,3-dioxopentyl phosphate + H2O. It participates in amino-acid biosynthesis; L-methionine biosynthesis via salvage pathway; L-methionine from S-methyl-5-thio-alpha-D-ribose 1-phosphate: step 2/6. Functionally, catalyzes the dehydration of methylthioribulose-1-phosphate (MTRu-1-P) into 2,3-diketo-5-methylthiopentyl-1-phosphate (DK-MTP-1-P). The protein is Methylthioribulose-1-phosphate dehydratase of Bacillus thuringiensis (strain Al Hakam).